Consider the following 102-residue polypeptide: Putative peripheral benzodiazepine receptor-related protein (102 aa).

As to expression, ubiquitous.

The chain is Putative peripheral benzodiazepine receptor-related protein (TSPO) from Homo sapiens (Human).